Consider the following 1411-residue polypeptide: Regulating synaptic membrane exocytosis protein 2 (1411 aa).

The disordered stretch occupies residues 1–33 (MSAPVGPRGRLAPIPAASQPPLQPEMPDLSHLT). Positions 26-185 (MPDLSHLTEE…TKSGAWFYNS (160 aa)) constitute a RabBD domain. Residues 117 to 173 (KGDAPTCGICHKTKFADGCGHNCSYCQTKFCARCGGRVSLRSNKVMWVCNLCRKQQE) form an FYVE-type zinc finger. Residues Cys123, Cys126, Cys139, Cys142, Cys147, Cys150, Cys165, and Cys168 each contribute to the Zn(2+) site. Composition is skewed to basic and acidic residues over residues 203–216 (NEEA…KLHE), 273–287 (DQNR…REEY), 318–329 (DSDHLSYRDSNR), 348–366 (RDEY…RYRS), 382–401 (EQMR…RHSD), and 410–434 (EDSR…RRAA). 2 disordered regions span residues 203–598 (NEEA…SERQ) and 623–650 (SGVD…WQPS). Phosphoserine is present on Ser400. The segment covering 451-463 (GPSSYAQRTTNHS) has biased composition (polar residues). The segment covering 475–492 (DRPDLRRTDSLRKQHHLD) has biased composition (basic and acidic residues). Positions 510–521 (RNDSLSSDQSES) are enriched in polar residues. Over residues 528–537 (KPHKSKKGGK) the composition is skewed to basic residues. Residues 558–568 (SCDDVEIESES) are compositionally biased toward acidic residues. Basic and acidic residues-rich tracts occupy residues 569 to 583 (VSEK…RKTS) and 634 to 644 (NEEHSHSDKHP). The PDZ domain occupies 668–754 (DGSVPRDSGA…EPQVELVVSR (87 aa)). Thr689 is subject to Phosphothreonine. Positions 762–793 (IPDSTHAQLESSSSSFESQKMDRPSISVTSPM) are disordered. Residues Ser791 and Ser794 each carry the phosphoserine modification. The C2 1 domain maps to 805–928 (LSGQLSIKLW…ALLDDEPHWY (124 aa)). Disordered stretches follow at residues 939 to 973 (PLPH…SEVS) and 993 to 1190 (DLQS…STET). 2 stretches are compositionally biased toward polar residues: residues 994 to 1015 (LQSS…SPSG) and 1049 to 1059 (RTMTGHYNTIS). A compositionally biased stretch (basic and acidic residues) spans 1060–1113 (RMDRHRVMDDHYSPDRDRDCEAADRQPYHRSRSTEQRPLLERTTTRSRSTERPD). Residues 1143-1153 (GSVQTSPSSTP) show a composition bias toward polar residues. The residue at position 1148 (Ser1148) is a Phosphoserine. Residues 1257–1375 (AMGDIQVGMM…ELSNMVIGWF (119 aa)) form the C2 2 domain. A phosphoserine mark is found at Ser1396 and Ser1399.

In terms of assembly, interacts with RAB3A and RAB3B that have been activated by GTP-binding. Interacts with RAB3C, RAB3D and RAB26. Interacts with TSPOAP1 and RIMBP2. Interacts with PPFIA3 and PPFIA4. Interacts via its zinc finger with the first C2 domain of UNC13A. Forms a complex consisting of UNC13A, RIMS2 and RAB3A. Heterodimer with PCLO. Part of a ternary complex involving PCLO and EPAC2. In terms of tissue distribution, widely expressed. Expressed in melanocytes. In fetal tissues, predominantly expressed in the brain. In the retina, expressed in the outer plexiform layer (at protein level). In the cerebellum, expressed in Purkinje cells (at protein level). In the pancreas, expressed in Langerhans islets (at protein level).

The protein resides in the cell membrane. It localises to the synapse. Its subcellular location is the presynaptic cell membrane. In terms of biological role, rab effector involved in exocytosis. May act as scaffold protein. Plays a role in dendrite formation by melanocytes. The sequence is that of Regulating synaptic membrane exocytosis protein 2 (RIMS2) from Homo sapiens (Human).